Consider the following 417-residue polypeptide: Tyrosine--tRNA ligase (417 aa).

Residue Tyr-34 coordinates L-tyrosine. The 'HIGH' region motif lies at 39–48 (PTAKSIHIGN). L-tyrosine-binding residues include Tyr-165 and Gln-169. The short motif at 227 to 231 (KFGKS) is the 'KMSKS' region element. Residue Lys-230 participates in ATP binding. Residues 349–416 (TDVVELLVKD…GKKKYFLAKV (68 aa)) form the S4 RNA-binding domain.

The protein belongs to the class-I aminoacyl-tRNA synthetase family. TyrS type 1 subfamily. As to quaternary structure, homodimer.

The protein localises to the cytoplasm. It carries out the reaction tRNA(Tyr) + L-tyrosine + ATP = L-tyrosyl-tRNA(Tyr) + AMP + diphosphate + H(+). Catalyzes the attachment of tyrosine to tRNA(Tyr) in a two-step reaction: tyrosine is first activated by ATP to form Tyr-AMP and then transferred to the acceptor end of tRNA(Tyr). The sequence is that of Tyrosine--tRNA ligase from Oenococcus oeni (strain ATCC BAA-331 / PSU-1).